We begin with the raw amino-acid sequence, 842 residues long: Squamosa promoter-binding-like protein 9 (842 aa).

Residues 1 to 18 are compositionally biased toward gly residues; it reads MDAPGGGGGGGGGGGGVD. Disordered stretches follow at residues 1-22, 59-97, and 140-168; these read MDAP…AGEP, ALLP…RVRK, and RKKP…TPAE. Over residues 69-85 the composition is skewed to low complexity; that stretch reads PAEAEAEAAGPASLPSS. The span at 146–162 shows a compositional bias: gly residues; it reads AGRGSGAAVGGSGGGAS. The SBP-type; atypical zinc finger occupies 168-245; the sequence is EMKCQVPGCE…ERHNKRRRRK (78 aa). Cys-171, Cys-176, Cys-193, Cys-196, Cys-212, Cys-215, His-219, and Cys-231 together coordinate Zn(2+). The Bipartite nuclear localization signal motif lies at 228-244; sequence KRSCRRKLERHNKRRRR. Positions 236–246 are enriched in basic residues; it reads ERHNKRRRRKP. The segment at 236–256 is disordered; that stretch reads ERHNKRRRRKPDSKGILEKDI.

Ubiquitous.

It localises to the nucleus. Functionally, trans-acting factor that binds specifically to the consensus nucleotide sequence 5'-TNCGTACAA-3'. This Oryza sativa subsp. japonica (Rice) protein is Squamosa promoter-binding-like protein 9 (SPL9).